Here is a 171-residue protein sequence, read N- to C-terminus: CS1 fimbrial subunit A (171 aa).

The first 23 residues, 1–23 (MKLKKTIGAMALATLFATMGASA), serve as a signal peptide directing secretion.

Belongs to the fimbrial CS1 protein family.

It is found in the fimbrium. Its function is as follows. Fimbriae (also called pili), polar filaments radiating from the surface of the bacterium to a length of 0.5-1.5 micrometers and numbering 100-300 per cell, enable bacteria to colonize the epithelium of specific host organs. This Escherichia coli protein is CS1 fimbrial subunit A (csoA).